The sequence spans 312 residues: Sulfate adenylyltransferase subunit 2 (312 aa).

This sequence belongs to the PAPS reductase family. CysD subfamily. In terms of assembly, heterodimer composed of CysD, the smaller subunit, and CysN.

The catalysed reaction is sulfate + ATP + H(+) = adenosine 5'-phosphosulfate + diphosphate. The protein operates within sulfur metabolism; hydrogen sulfide biosynthesis; sulfite from sulfate: step 1/3. In terms of biological role, with CysN forms the ATP sulfurylase (ATPS) that catalyzes the adenylation of sulfate producing adenosine 5'-phosphosulfate (APS) and diphosphate, the first enzymatic step in sulfur assimilation pathway. APS synthesis involves the formation of a high-energy phosphoric-sulfuric acid anhydride bond driven by GTP hydrolysis by CysN coupled to ATP hydrolysis by CysD. In Methylobacterium nodulans (strain LMG 21967 / CNCM I-2342 / ORS 2060), this protein is Sulfate adenylyltransferase subunit 2.